The following is a 407-amino-acid chain: Imidazolonepropionase (407 aa).

Residues histidine 74 and histidine 76 each coordinate Fe(3+). Zn(2+) is bound by residues histidine 74 and histidine 76. Positions 83, 146, and 179 each coordinate 4-imidazolone-5-propanoate. Tyrosine 146 is an N-formimidoyl-L-glutamate binding site. Histidine 244 provides a ligand contact to Fe(3+). Position 244 (histidine 244) interacts with Zn(2+). Position 247 (glutamine 247) interacts with 4-imidazolone-5-propanoate. Aspartate 319 is a Fe(3+) binding site. Zn(2+) is bound at residue aspartate 319. Residues asparagine 321 and glycine 323 each coordinate N-formimidoyl-L-glutamate. Residue threonine 324 participates in 4-imidazolone-5-propanoate binding.

It belongs to the metallo-dependent hydrolases superfamily. HutI family. Zn(2+) is required as a cofactor. The cofactor is Fe(3+).

The protein resides in the cytoplasm. The catalysed reaction is 4-imidazolone-5-propanoate + H2O = N-formimidoyl-L-glutamate. It functions in the pathway amino-acid degradation; L-histidine degradation into L-glutamate; N-formimidoyl-L-glutamate from L-histidine: step 3/3. In terms of biological role, catalyzes the hydrolytic cleavage of the carbon-nitrogen bond in imidazolone-5-propanoate to yield N-formimidoyl-L-glutamate. It is the third step in the universal histidine degradation pathway. This chain is Imidazolonepropionase, found in Salmonella heidelberg (strain SL476).